Here is a 188-residue protein sequence, read N- to C-terminus: Cytochrome c-type protein NrfB (188 aa).

A signal peptide spans M1–A32. Heme contacts are provided by C49, C52, H53, C78, C81, H82, C113, C116, H117, C138, C141, H142, C163, C166, and H167.

Binds 5 heme groups per subunit.

Its subcellular location is the periplasm. Its pathway is energy metabolism; nitrogen metabolism. In terms of biological role, plays a role in nitrite reduction. The protein is Cytochrome c-type protein NrfB (nrfB) of Escherichia coli O6:H1 (strain CFT073 / ATCC 700928 / UPEC).